A 340-amino-acid chain; its full sequence is 3-isopropylmalate dehydrogenase (340 aa).

Substrate-binding residues include Arg88, Arg98, Arg122, and Asp212. Residues Asp212, Asp236, and Asp240 each coordinate Mg(2+). NAD(+) is bound at residue 272–284 (GSAPDIAGQGIAD).

This sequence belongs to the isocitrate and isopropylmalate dehydrogenases family. LeuB type 2 subfamily. As to quaternary structure, homodimer. It depends on Mg(2+) as a cofactor. The cofactor is Mn(2+).

The protein resides in the cytoplasm. It catalyses the reaction (2R,3S)-3-isopropylmalate + NAD(+) = 4-methyl-2-oxopentanoate + CO2 + NADH. It functions in the pathway amino-acid biosynthesis; L-leucine biosynthesis; L-leucine from 3-methyl-2-oxobutanoate: step 3/4. Functionally, catalyzes the oxidation of 3-carboxy-2-hydroxy-4-methylpentanoate (3-isopropylmalate) to 3-carboxy-4-methyl-2-oxopentanoate. The product decarboxylates to 4-methyl-2 oxopentanoate. In Corynebacterium glutamicum (strain R), this protein is 3-isopropylmalate dehydrogenase.